A 275-amino-acid chain; its full sequence is Large ribosomal subunit protein uL2 (275 aa).

Residues 208 to 275 (AGAKRWRGRR…NMIIRDRRKK (68 aa)) form a disordered region. Basic residues-rich tracts occupy residues 209–219 (GAKRWRGRRPT) and 254–263 (KGYKTRRNKR).

Belongs to the universal ribosomal protein uL2 family. As to quaternary structure, part of the 50S ribosomal subunit. Forms a bridge to the 30S subunit in the 70S ribosome.

Functionally, one of the primary rRNA binding proteins. Required for association of the 30S and 50S subunits to form the 70S ribosome, for tRNA binding and peptide bond formation. It has been suggested to have peptidyltransferase activity; this is somewhat controversial. Makes several contacts with the 16S rRNA in the 70S ribosome. In Coxiella burnetii (strain CbuG_Q212) (Coxiella burnetii (strain Q212)), this protein is Large ribosomal subunit protein uL2.